Consider the following 651-residue polypeptide: Mediator of RNA polymerase II transcription subunit 17 (651 aa).

The segment at 51–83 is disordered; sequence QGSGSEEEEAAGTEGDAQEWPGAGSSADQDDEE.

It belongs to the Mediator complex subunit 17 family. Interacts with GATA1 and PPARG. Component of the Mediator complex, which is composed of MED1, MED4, MED6, MED7, MED8, MED9, MED10, MED11, MED12, MED13, MED13L, MED14, MED15, MED16, MED17, MED18, MED19, MED20, MED21, MED22, MED23, MED24, MED25, MED26, MED27, MED29, MED30, MED31, CCNC, CDK8 and CDC2L6/CDK11. The MED12, MED13, CCNC and CDK8 subunits form a distinct module termed the CDK8 module. Mediator containing the CDK8 module is less active than Mediator lacking this module in supporting transcriptional activation. Individual preparations of the Mediator complex lacking one or more distinct subunits have been variously termed ARC, CRSP, DRIP, PC2, SMCC and TRAP. Interacts with STAT2. In terms of tissue distribution, ubiquitous.

It localises to the nucleus. Component of the Mediator complex, a coactivator involved in the regulated transcription of nearly all RNA polymerase II-dependent genes. Mediator functions as a bridge to convey information from gene-specific regulatory proteins to the basal RNA polymerase II transcription machinery. Mediator is recruited to promoters by direct interactions with regulatory proteins and serves as a scaffold for the assembly of a functional preinitiation complex with RNA polymerase II and the general transcription factors. This is Mediator of RNA polymerase II transcription subunit 17 (MED17) from Homo sapiens (Human).